Here is a 332-residue protein sequence, read N- to C-terminus: Capsular polysaccharide phosphotransferase WcwK (332 aa).

Belongs to the stealth family.

The sequence is that of Capsular polysaccharide phosphotransferase WcwK (wcwK) from Streptococcus pneumoniae.